The chain runs to 349 residues: Signal peptidase I (349 aa).

2 helical membrane passes run 3-23 (NLFF…LDYF) and 25-45 (LPNT…VLWC). At 46 to 80 (YHRFVVLPKRHRQVARAEQRSGKTLSEEEKAKIEP) the chain is on the cytoplasmic side. Residues 81–101 (ISEASEFLSSLFPVLAVVFLV) traverse the membrane as a helical segment. Over 102–349 (RSFLFEPFQI…RFERFFTAIK (248 aa)) the chain is Periplasmic. Catalysis depends on residues serine 115 and lysine 196.

Belongs to the peptidase S26 family.

It is found in the cell inner membrane. It catalyses the reaction Cleavage of hydrophobic, N-terminal signal or leader sequences from secreted and periplasmic proteins.. The protein is Signal peptidase I (lepB) of Haemophilus influenzae (strain ATCC 51907 / DSM 11121 / KW20 / Rd).